The sequence spans 316 residues: tRNA uridine(34) hydroxylase (316 aa).

Residues 136–230 (ADENTVVVDK…YLEEVPREQS (95 aa)) enclose the Rhodanese domain. C190 (cysteine persulfide intermediate) is an active-site residue.

This sequence belongs to the TrhO family.

The enzyme catalyses uridine(34) in tRNA + AH2 + O2 = 5-hydroxyuridine(34) in tRNA + A + H2O. Functionally, catalyzes oxygen-dependent 5-hydroxyuridine (ho5U) modification at position 34 in tRNAs. This Brucella abortus (strain 2308) protein is tRNA uridine(34) hydroxylase.